Here is a 192-residue protein sequence, read N- to C-terminus: Cytochrome c4 (192 aa).

Cytochrome c domains lie at 12–90 (GDPQ…ATQP) and 99–191 (ELAS…QGLS). The heme c site is built by Cys-25, Cys-28, His-29, Cys-120, Cys-123, and His-124.

Post-translationally, binds 2 heme c groups covalently per subunit.

Its subcellular location is the periplasm. Its function is as follows. Diheme, high potential cytochrome c believed to be an intermediate electron donor in an anaerobic electron transport chain. This Thiocapsa roseopersicina protein is Cytochrome c4.